The following is a 270-amino-acid chain: Urease accessory protein UreD (270 aa).

It belongs to the UreD family. UreD, UreF and UreG form a complex that acts as a GTP-hydrolysis-dependent molecular chaperone, activating the urease apoprotein by helping to assemble the nickel containing metallocenter of UreC. The UreE protein probably delivers the nickel.

It is found in the cytoplasm. Required for maturation of urease via the functional incorporation of the urease nickel metallocenter. The polypeptide is Urease accessory protein UreD (Klebsiella pneumoniae).